Consider the following 299-residue polypeptide: MPELPEVETVRRGLAPAMVGARVARVTLRRPNLRFPFPERFAERLEGTTVLELARRAKYLTAHLDSGESLILHLGMSGRFDVRLPDGSNLSPGDFYLEGALGTPKHDHVVMAFANGATVTYNDARRFGFMDLVATRDLETCRHFASMGVEPLSDALDAPLLARLFARKITPLKAALLDQRLIAGLGNIYVCEALHRSGLHPALPAGALAKPDGSPAPKAKTLVKEIKAVLTEAVAAGGSTLRDYARPDGERGAFQHGFRVYDRVGHACPTKGCTGRVGRIVQGGRSTFFCETCQVLPVR.

Pro-2 (schiff-base intermediate with DNA) is an active-site residue. Residue Glu-3 is the Proton donor of the active site. The Proton donor; for beta-elimination activity role is filled by Lys-58. DNA contacts are provided by His-106, Arg-125, and Lys-168. An FPG-type zinc finger spans residues 259–295; sequence RVYDRVGHACPTKGCTGRVGRIVQGGRSTFFCETCQV. Catalysis depends on Arg-285, which acts as the Proton donor; for delta-elimination activity.

It belongs to the FPG family. Monomer. Zn(2+) is required as a cofactor.

It catalyses the reaction Hydrolysis of DNA containing ring-opened 7-methylguanine residues, releasing 2,6-diamino-4-hydroxy-5-(N-methyl)formamidopyrimidine.. The catalysed reaction is 2'-deoxyribonucleotide-(2'-deoxyribose 5'-phosphate)-2'-deoxyribonucleotide-DNA = a 3'-end 2'-deoxyribonucleotide-(2,3-dehydro-2,3-deoxyribose 5'-phosphate)-DNA + a 5'-end 5'-phospho-2'-deoxyribonucleoside-DNA + H(+). Its function is as follows. Involved in base excision repair of DNA damaged by oxidation or by mutagenic agents. Acts as a DNA glycosylase that recognizes and removes damaged bases. Has a preference for oxidized purines, such as 7,8-dihydro-8-oxoguanine (8-oxoG). Has AP (apurinic/apyrimidinic) lyase activity and introduces nicks in the DNA strand. Cleaves the DNA backbone by beta-delta elimination to generate a single-strand break at the site of the removed base with both 3'- and 5'-phosphates. This chain is Formamidopyrimidine-DNA glycosylase, found in Methylorubrum extorquens (strain CM4 / NCIMB 13688) (Methylobacterium extorquens).